The following is a 229-amino-acid chain: 2-C-methyl-D-erythritol 4-phosphate cytidylyltransferase (229 aa).

This sequence belongs to the IspD/TarI cytidylyltransferase family. IspD subfamily.

The enzyme catalyses 2-C-methyl-D-erythritol 4-phosphate + CTP + H(+) = 4-CDP-2-C-methyl-D-erythritol + diphosphate. It participates in isoprenoid biosynthesis; isopentenyl diphosphate biosynthesis via DXP pathway; isopentenyl diphosphate from 1-deoxy-D-xylulose 5-phosphate: step 2/6. In terms of biological role, catalyzes the formation of 4-diphosphocytidyl-2-C-methyl-D-erythritol from CTP and 2-C-methyl-D-erythritol 4-phosphate (MEP). This chain is 2-C-methyl-D-erythritol 4-phosphate cytidylyltransferase, found in Clostridium botulinum (strain Loch Maree / Type A3).